A 414-amino-acid chain; its full sequence is Lysocardiolipin acyltransferase 1 (414 aa).

A run of 2 helical transmembrane segments spans residues 47 to 67 (FILT…SPFL) and 86 to 106 (ATWL…KVII). The HXXXXD motif motif lies at 123–128 (HRTRMD). N6-acetyllysine is present on Lys221. Helical transmembrane passes span 340–360 (LRVL…SPAM) and 362–382 (LLIY…VIFV).

Belongs to the 1-acyl-sn-glycerol-3-phosphate acyltransferase family. As to expression, expressed at higher level in heart, kidney and pancreas than in brain, spleen, liver, lung, small intestine and placenta.

The protein localises to the endoplasmic reticulum membrane. It carries out the reaction a 1-acyl-sn-glycero-3-phosphate + an acyl-CoA = a 1,2-diacyl-sn-glycero-3-phosphate + CoA. The catalysed reaction is a 1-acyl-sn-glycero-3-phospho-(1D-myo-inositol) + an acyl-CoA = a 1,2-diacyl-sn-glycero-3-phospho-(1D-myo-inositol) + CoA. The enzyme catalyses 1-acyl-sn-glycero-3-phospho-(1'-sn-glycerol) + an acyl-CoA = a 1,2-diacyl-sn-glycero-3-phospho-(1'-sn-glycerol) + CoA. It catalyses the reaction 1-hexadecanoyl-sn-glycero-3-phosphate + (9Z)-octadecenoyl-CoA = 1-hexadecanoyl-2-(9Z-octadecenoyl)-sn-glycero-3-phosphate + CoA. It carries out the reaction 1-(9Z-octadecenoyl)-sn-glycero-3-phosphate + (9Z)-octadecenoyl-CoA = 1,2-di-(9Z-octadecenoyl)-sn-glycero-3-phosphate + CoA. The catalysed reaction is 1-(9Z,12Z)-octadecadienoyl-sn-glycero-3-phosphate + (9Z)-octadecenoyl-CoA = 1-(9Z,12Z)-octadecadienoyl-2-(9Z)-octadecenoyl-sn-glycero-3-phosphate + CoA. The enzyme catalyses 1-(9Z,12Z,15Z)-octadecatrienoyl-sn-glycero-3-phosphate + (9Z)-octadecenoyl-CoA = 1-(9Z,12Z,15Z)-octadecatrienoyl-2-(9Z)-octadecenoyl-sn-glycero-3-phosphate + CoA. It catalyses the reaction 1-(9Z-octadecenoyl)-sn-glycero-3-phosphate + hexadecanoyl-CoA = 1-(9Z)-octadecenoyl-2-hexadecanoyl-sn-glycero-3-phosphate + CoA. It carries out the reaction 1-(9Z-octadecenoyl)-sn-glycero-3-phosphate + octadecanoyl-CoA = 1-(9Z-octadecenoyl)-2-octadecanoyl-sn-glycero-3-phosphate + CoA. The catalysed reaction is 1-acyl-sn-glycero-3-phospho-(1'-sn-glycerol) + (9Z)-octadecenoyl-CoA = 1-acyl-2-(9Z-octadecenoyl)-sn-glycero-3-phospho-(1'-sn-glycerol) + CoA. The enzyme catalyses a 1-acyl-sn-glycero-3-phospho-(1D-myo-inositol) + (9Z)-octadecenoyl-CoA = a 1-acyl-2-(9Z-octadecenoyl)-sn-glycero-3-phospho-(1D-myo-inositol) + CoA. It catalyses the reaction 1-hexadecanoyl-sn-glycero-3-phospho-(1D-myo-inositol) + hexadecanoyl-CoA = 1,2-dihexadecanoyl-sn-glycero-3-phospho-(1D-myo-inositol) + CoA. It carries out the reaction 1-hexadecanoyl-sn-glycero-3-phospho-(1D-myo-inositol) + octadecanoyl-CoA = 1-hexadecanoyl-2-octadecanoyl-sn-glycero-3-phospho-(1D-myo-inositol) + CoA. The catalysed reaction is 1-hexadecanoyl-sn-glycero-3-phospho-(1D-myo-inositol) + (9Z)-octadecenoyl-CoA = 1-hexadecanoyl-2-(9Z-octadecenoyl)-sn-glycero-3-phospho-(1D-myo-inositol) + CoA. The enzyme catalyses 1-hexadecanoyl-sn-glycero-3-phospho-(1D-myo-inositol) + (9Z,12Z)-octadecadienoyl-CoA = 1-hexadecanoyl-2-(9Z,12Z-octadecadienoyl)-sn-glycero-3-phospho-(1D-myo-inositol) + CoA. It catalyses the reaction 1-hexadecanoyl-sn-glycero-3-phospho-(1D-myo-inositol) + (5Z,8Z,11Z,14Z)-eicosatetraenoyl-CoA = 1-hexadecanoyl-2-(5Z,8Z,11Z,14Z-eicosatetraenoyl)-sn-glycero-3-phospho-D-myo-inositol + CoA. It carries out the reaction 1-hexadecanoyl-sn-glycero-3-phospho-(1'-sn-glycerol) + hexadecanoyl-CoA = 1,2-dihexadecanoyl-sn-glycero-3-phospho-(1'-sn-glycerol) + CoA. The catalysed reaction is 1-hexadecanoyl-sn-glycero-3-phospho-(1'-sn-glycerol) + octadecanoyl-CoA = 1-hexadecanoyl-2-octadecanoyl-sn-glycero-3-phospho-(1'-sn-glycerol) + CoA. The enzyme catalyses 1-hexadecanoyl-sn-glycero-3-phospho-(1'-sn-glycerol) + (9Z)-octadecenoyl-CoA = 1-hexadecanoyl-2-(9Z-octadecenoyl)-sn-glycero-3-phospho-(1'-sn-glycerol) + CoA. It catalyses the reaction 1-hexadecanoyl-sn-glycero-3-phospho-(1'-sn-glycerol) + (9Z,12Z)-octadecadienoyl-CoA = 1-hexadecanoyl-2-(9Z,12Z-octadecadienoyl)-sn-glycero-3-phospho-(1'-sn-glycerol) + CoA. It carries out the reaction 1-tetradecanoyl-sn-glycero-3-phospho-(1'-sn-glycerol) + (9Z)-octadecenoyl-CoA = 1-tetradecanoyl-2-(9Z-octadecenoyl)-sn-glycero-3-phospho-(1'-sn-glycerol) + CoA. The catalysed reaction is 1-octadecanoyl-sn-glycero-3-phospho-(1'-sn-glycerol) + (9Z)-octadecenoyl-CoA = 1-octadecanoyl-2-(9Z-octadecenoyl)-sn-glycero-3-phospho-(1'-sn-glycerol) + CoA. The enzyme catalyses 1-(9Z-octadecenoyl)-sn-glycero-3-phospho-(1'-sn-glycerol) + (9Z)-octadecenoyl-CoA = 1,2-di-(9Z-octadecenoyl)-sn-glycero-3-phospho-(1'-sn-glycerol) + CoA. It catalyses the reaction 1-hexadecanoyl-sn-glycero-3-phospho-(1D-myo-inositol) + dodecanoyl-CoA = 1-hexadecanoyl-2-dodecanoyl-sn-glycero-3-phospho-(1D-myo-inositol) + CoA. It carries out the reaction 1',3'-bis-[1-acyl-sn-glycero-3-phospho]-glycerol + (9Z)-octadecenoyl-CoA = 1'-[1-acyl-2-(9Z)-octadecenoyl-sn-glycero-3-phospho],3'-[1-acyl,2-hydroxy-sn-glycero-3-phospho]-glycerol + CoA. The catalysed reaction is 1'-[1,2-diacyl-sn-glycero-3-phospho],3'-[1-acyl-sn-glycero-3-phospho]-glycerol + (9Z)-octadecenoyl-CoA = 1'-[1,2-diacyl-sn-glycero-3-phospho],3'-[1-acyl,2-(9Z)-octadecenoyl-sn-glycero-3-phospho]-glycerol + CoA. The enzyme catalyses 1'-[1,2-diacyl-sn-glycero-3-phospho],3'-[1-acyl-sn-glycero-3-phospho]-glycerol + (9Z,12Z)-octadecadienoyl-CoA = 1'-[1,2-diacyl-sn-glycero-3-phospho],3'-[1-acyl,2-(9Z,12Z)-octadecadienoyl-sn-glycero-3-phospho]-glycerol + CoA. It catalyses the reaction 1'-[1,2-diacyl-sn-glycero-3-phospho],3'-[1-acyl-sn-glycero-3-phospho]-glycerol + dodecanoyl-CoA = 1'-[1,2-diacyl-sn-glycero-3-phospho],3'-[1-acyl,2-dodecanoyl-sn-glycero-3-phospho]-glycerol + CoA. It carries out the reaction 1',3'-bis-[1-acyl-sn-glycero-3-phospho]-glycerol + dodecanoyl-CoA = 1'-[1-acyl-2-dodecanoyl-sn-glycero-3-phospho],3'-[1-acyl,2-hydroxy-sn-glycero-3-phospho]-glycerol + CoA. The catalysed reaction is a 1-acyl-sn-glycero-3-phosphate + (9Z)-octadecenoyl-CoA = a 1-acyl-2-(9Z-octadecenoyl)-sn-glycero-3-phosphate + CoA. The enzyme catalyses 1',3'-bis-[1-acyl-sn-glycero-3-phospho]-glycerol + (9Z,12Z)-octadecadienoyl-CoA = 1'-[1-acyl-2-(9Z,12Z)-octadecadienoyl-sn-glycero-3-phospho],3'-[1-acyl,2-hydroxy-sn-glycero-3-phospho]-glycerol + CoA. It catalyses the reaction 1',3'-bis-[1-acyl-sn-glycero-3-phospho]-glycerol + hexadecanoyl-CoA = 1'-[1-acyl-2-hexadecanoyl-sn-glycero-3-phospho],3'-[1-acyl,2-hydroxy-sn-glycero-3-phospho]-glycerol + CoA. It carries out the reaction 1',3'-bis-[1-acyl-sn-glycero-3-phospho]-glycerol + octadecanoyl-CoA = 1'-[1-acyl-2-octadecanoyl-sn-glycero-3-phospho],3'-[1-acyl,2-hydroxy-sn-glycero-3-phospho]-glycerol + CoA. The catalysed reaction is 1'-[1,2-diacyl-sn-glycero-3-phospho],3'-[1-acyl-sn-glycero-3-phospho]-glycerol + octanoyl-CoA = 1'-[1,2-diacyl-sn-glycero-3-phospho],3'-[1-acyl,2-octanoyl-sn-glycero-3-phospho]-glycerol + CoA. The enzyme catalyses 1',3'-bis-[1-acyl-sn-glycero-3-phospho]-glycerol + octanoyl-CoA = 1'-[1-acyl-2-octanoyl-sn-glycero-3-phospho],3'-[1-acyl,2-hydroxy-sn-glycero-3-phospho]-glycerol + CoA. It catalyses the reaction 1'-[1,2-diacyl-sn-glycero-3-phospho],3'-[1-acyl-sn-glycero-3-phospho]-glycerol + hexadecanoyl-CoA = 1'-[1,2-diacyl-sn-glycero-3-phospho],3'-[1-acyl,2-hexadecanoyl-sn-glycero-3-phospho]-glycerol + CoA. It carries out the reaction 1'-[1,2-diacyl-sn-glycero-3-phospho],3'-[1-acyl-sn-glycero-3-phospho]-glycerol + (5Z,8Z,11Z,14Z)-eicosatetraenoyl-CoA = 1'-[1,2-diacyl-sn-glycero-3-phospho],3'-[1-acyl,2-(5Z,8Z,11Z,14Z)-eicosatetraenoyl-sn-glycero-3-phospho]-glycerol + CoA. The catalysed reaction is 1',3'-bis-[1-acyl-sn-glycero-3-phospho]-glycerol + (5Z,8Z,11Z,14Z)-eicosatetraenoyl-CoA = 1'-[1-acyl-2-(5Z,8Z,11Z,14Z)-eicosatetraenoyl-sn-glycero-3-phospho],3'-[1-acyl,2-hydroxy-sn-glycero-3-phospho]-glycerol + CoA. The enzyme catalyses a 1-acyl-sn-glycero-3-phospho-(1D-myo-inositol) + octadecanoyl-CoA = a 1-acyl-2-octadecanoyl-sn-glycero-3-phospho-(1D-myo-inositol) + CoA. It catalyses the reaction a 2-acyl-sn-glycero-3-phospho-D-myo-inositol + octadecanoyl-CoA = 1-octadecanoyl-2-acyl-sn-glycero-3-phospho-1D-myo-inositol + CoA. It functions in the pathway phospholipid metabolism; CDP-diacylglycerol biosynthesis; CDP-diacylglycerol from sn-glycerol 3-phosphate: step 2/3. Exhibits acyl-CoA:lysocardiolipin acyltransferase (ALCAT) activity; catalyzes the reacylation of lyso-cardiolipin to cardiolipin (CL), a key step in CL remodeling. Recognizes both monolysocardiolipin and dilysocardiolipin as substrates with a preference for linoleoyl-CoA and oleoyl-CoA as acyl donors. Also exhibits 1-acyl-sn-glycerol-3-phosphate acyltransferase activity (AGPAT) activity; converts 1-acyl-sn-glycerol-3- phosphate (lysophosphatidic acid or LPA) into 1,2-diacyl-sn-glycerol-3- phosphate (phosphatidic acid or PA) by incorporating an acyl moiety at the sn-2 position of the glycerol backbone. Possesses both lysophosphatidylinositol acyltransferase (LPIAT) and lysophosphatidylglycerol acyltransferase (LPGAT) activities. Required for establishment of the hematopoietic and endothelial lineages. This is Lysocardiolipin acyltransferase 1 (LCLAT1) from Homo sapiens (Human).